The chain runs to 437 residues: MPRLFGTDGVRGLANGETITADLALRLAQAAAHVLGQDARDPRVSGEFIAAAVAAGLASSGVDVFDAGVIPTPATAYLIADFDADFGVMISASHNPAPDNGIKFFAAGGRKLADELEDRIEAQLSRPVLLPTGADVGRIRRFADAEDRYVLHLLGTLQHRLDGIHVVLDCAHGAAAGISPEVFTDAGARVTVIGNDPDGMNINDRVGSTHLDLLAEAVLAHGADVGIAHDGDADRCLAVDHTGAIIDGDQIMAVLALSMARRGLLAERTLVATVMSNLGLRIAMAENDITVMQTRVGDRYVLEAMNEGGYSLGGEQSGHLVIAEHATTGDGILTGIQLLGEMAATGKSLHELASVMTVYPQVMINVRGVDRDRVGDDAELNAAVARAEAELGDTGRILMRASGTEPMIRVMVEAADQATAERHAEELAALVTERLAI.

Ser-93 serves as the catalytic Phosphoserine intermediate. Positions 93, 230, 232, and 234 each coordinate Mg(2+). Phosphoserine is present on Ser-93.

Belongs to the phosphohexose mutase family. It depends on Mg(2+) as a cofactor. Activated by phosphorylation.

It carries out the reaction alpha-D-glucosamine 1-phosphate = D-glucosamine 6-phosphate. Catalyzes the conversion of glucosamine-6-phosphate to glucosamine-1-phosphate. This Clavibacter michiganensis subsp. michiganensis (strain NCPPB 382) protein is Phosphoglucosamine mutase.